Here is a 358-residue protein sequence, read N- to C-terminus: UPF0324 membrane protein CT0845 (358 aa).

10 consecutive transmembrane segments (helical) span residues 36–53, 57–76, 83–105, 115–134, 146–168, 178–200, 244–261, 276–295, 307–325, and 335–357; these read YFPG…ATFL, YGAP…RFLS, LVGI…GMRI, VKPV…FGLA, GVLT…AAVL, TIFT…PVVA, LLRV…SLIF, LLPP…SLGV, VSRW…KTSL, and PVSI…VVWM.

It belongs to the UPF0324 family.

It localises to the cell membrane. The chain is UPF0324 membrane protein CT0845 from Chlorobaculum tepidum (strain ATCC 49652 / DSM 12025 / NBRC 103806 / TLS) (Chlorobium tepidum).